The following is a 254-amino-acid chain: NAD-dependent protein deacylase (254 aa).

The region spanning 1 to 250 (MERLEEARKR…LPPSPEDQAE (250 aa)) is the Deacetylase sirtuin-type domain. 22–41 (GAGISKPSGIPTFRDAEGLW) is a binding site for NAD(+). Substrate contacts are provided by tyrosine 66 and arginine 69. An NAD(+)-binding site is contributed by 104–107 (QNVD). Histidine 122 acts as the Proton acceptor in catalysis. Zn(2+) is bound by residues cysteine 130, cysteine 133, cysteine 149, and cysteine 152. Residues 189–191 (GTS), 215–217 (NPE), and alanine 233 each bind NAD(+).

It belongs to the sirtuin family. Class III subfamily. Zn(2+) is required as a cofactor.

It is found in the cytoplasm. The enzyme catalyses N(6)-acetyl-L-lysyl-[protein] + NAD(+) + H2O = 2''-O-acetyl-ADP-D-ribose + nicotinamide + L-lysyl-[protein]. It catalyses the reaction N(6)-succinyl-L-lysyl-[protein] + NAD(+) + H2O = 2''-O-succinyl-ADP-D-ribose + nicotinamide + L-lysyl-[protein]. Its function is as follows. NAD-dependent lysine deacetylase and desuccinylase that specifically removes acetyl and succinyl groups on target proteins. Modulates the activities of several proteins which are inactive in their acylated form. The protein is NAD-dependent protein deacylase of Thermus thermophilus (strain ATCC 27634 / DSM 579 / HB8).